Here is a 337-residue protein sequence, read N- to C-terminus: Heme A synthase (337 aa).

Helical transmembrane passes span 6–26 (ITKW…IGGI), 87–107 (FIHR…LIYF), 119–139 (LPYI…WYMV), 154–174 (LAFH…QLIK), and 192–212 (LIFS…GALV). His256 serves as a coordination point for heme. 3 consecutive transmembrane segments (helical) span residues 258–278 (LVGY…LKIE), 285–305 (IAYF…ITLL), and 308–328 (VPII…SIII). A heme-binding site is contributed by His316.

This sequence belongs to the COX15/CtaA family. Type 2 subfamily. In terms of assembly, interacts with CtaB. The cofactor is heme b.

It localises to the cell membrane. It carries out the reaction Fe(II)-heme o + 2 A + H2O = Fe(II)-heme a + 2 AH2. It participates in porphyrin-containing compound metabolism; heme A biosynthesis; heme A from heme O: step 1/1. Catalyzes the conversion of heme O to heme A by two successive hydroxylations of the methyl group at C8. The first hydroxylation forms heme I, the second hydroxylation results in an unstable dihydroxymethyl group, which spontaneously dehydrates, resulting in the formyl group of heme A. This Rickettsia africae (strain ESF-5) protein is Heme A synthase.